A 158-amino-acid polypeptide reads, in one-letter code: UPF0725 protein At3g57210 (158 aa).

This sequence belongs to the UPF0725 (EMB2204) family.

The polypeptide is UPF0725 protein At3g57210 (Arabidopsis thaliana (Mouse-ear cress)).